We begin with the raw amino-acid sequence, 547 residues long: Varicidin biosynthesis cluster MFS-type transporer (547 aa).

Residues 1-17 show a composition bias toward polar residues; the sequence is MTTSTSKNAISKSSQED. The tract at residues 1 to 33 is disordered; the sequence is MTTSTSKNAISKSSQEDLCSDTKDKGSSGGGNE. 11 helical membrane-spanning segments follow: residues 47-67, 156-176, 183-203, 224-244, 252-272, 296-316, 330-350, 360-382, 392-412, 422-442, and 503-523; these read LVLL…VCIS, LAPS…SVFT, WCFW…FLFV, ALGT…LQWG, SWRV…WLYV, ILFT…VPIW, INFL…GTLV, GQWR…WRYN, AGTL…PFIA, ISLG…VFLA, and CFLV…GMEW.

This sequence belongs to the major facilitator superfamily. TCR/Tet family.

It is found in the cell membrane. In terms of biological role, MFS-type transporer; part of the gene cluster that mediates the biosynthesis of varicidin A, an antifungal natural product containing a cis-octahydrodecalin core. The protein is Varicidin biosynthesis cluster MFS-type transporer of Talaromyces variabilis (Penicillium variabile).